Consider the following 181-residue polypeptide: Large ribosomal subunit protein eL18 (181 aa).

The disordered stretch occupies residues 152-181 (WGKAPGQRGSHSAPYVRSEGRKFERAHGLK). Residues 169–181 (SEGRKFERAHGLK) are compositionally biased toward basic and acidic residues.

It belongs to the eukaryotic ribosomal protein eL18 family.

It localises to the cytoplasm. The chain is Large ribosomal subunit protein eL18 (RPL18) from Tetrahymena thermophila.